The sequence spans 464 residues: ATP synthase subunit beta (464 aa).

153–160 (GGAGVGKT) contributes to the ATP binding site.

This sequence belongs to the ATPase alpha/beta chains family. F-type ATPases have 2 components, CF(1) - the catalytic core - and CF(0) - the membrane proton channel. CF(1) has five subunits: alpha(3), beta(3), gamma(1), delta(1), epsilon(1). CF(0) has three main subunits: a(1), b(2) and c(9-12). The alpha and beta chains form an alternating ring which encloses part of the gamma chain. CF(1) is attached to CF(0) by a central stalk formed by the gamma and epsilon chains, while a peripheral stalk is formed by the delta and b chains.

The protein resides in the cell inner membrane. It carries out the reaction ATP + H2O + 4 H(+)(in) = ADP + phosphate + 5 H(+)(out). Produces ATP from ADP in the presence of a proton gradient across the membrane. The catalytic sites are hosted primarily by the beta subunits. In Burkholderia vietnamiensis (strain G4 / LMG 22486) (Burkholderia cepacia (strain R1808)), this protein is ATP synthase subunit beta.